The primary structure comprises 121 residues: Small ribosomal subunit protein uS12c (121 aa).

The protein belongs to the universal ribosomal protein uS12 family. In terms of assembly, part of the 30S ribosomal subunit.

It localises to the plastid. The protein localises to the apicoplast. Its function is as follows. With S4 and S5 plays an important role in translational accuracy. Located at the interface of the 30S and 50S subunits. This is Small ribosomal subunit protein uS12c (rps12) from Toxoplasma gondii.